A 176-amino-acid chain; its full sequence is Shikimate kinase (176 aa).

Residue T10–S15 participates in ATP binding. Mg(2+) is bound at residue S14. D32, G81, and R138 together coordinate substrate.

It belongs to the shikimate kinase family. Monomer. The cofactor is Mg(2+).

It is found in the cytoplasm. The catalysed reaction is shikimate + ATP = 3-phosphoshikimate + ADP + H(+). It participates in metabolic intermediate biosynthesis; chorismate biosynthesis; chorismate from D-erythrose 4-phosphate and phosphoenolpyruvate: step 5/7. Catalyzes the specific phosphorylation of the 3-hydroxyl group of shikimic acid using ATP as a cosubstrate. In Chlamydia pneumoniae (Chlamydophila pneumoniae), this protein is Shikimate kinase.